The sequence spans 284 residues: 4-diphosphocytidyl-2-C-methyl-D-erythritol kinase (284 aa).

Lys14 is an active-site residue. Residue 98–108 participates in ATP binding; sequence PMGGGLGGGSS. Asp140 is a catalytic residue.

It belongs to the GHMP kinase family. IspE subfamily.

It catalyses the reaction 4-CDP-2-C-methyl-D-erythritol + ATP = 4-CDP-2-C-methyl-D-erythritol 2-phosphate + ADP + H(+). It participates in isoprenoid biosynthesis; isopentenyl diphosphate biosynthesis via DXP pathway; isopentenyl diphosphate from 1-deoxy-D-xylulose 5-phosphate: step 3/6. Catalyzes the phosphorylation of the position 2 hydroxy group of 4-diphosphocytidyl-2C-methyl-D-erythritol. This Shewanella sp. (strain W3-18-1) protein is 4-diphosphocytidyl-2-C-methyl-D-erythritol kinase.